Reading from the N-terminus, the 499-residue chain is Probable cytosol aminopeptidase (499 aa).

Mn(2+)-binding residues include Lys-262 and Asp-267. Residue Lys-274 is part of the active site. Residues Asp-285, Asp-344, and Glu-346 each contribute to the Mn(2+) site. Residue Arg-348 is part of the active site.

Belongs to the peptidase M17 family. Mn(2+) is required as a cofactor.

The protein localises to the cytoplasm. The enzyme catalyses Release of an N-terminal amino acid, Xaa-|-Yaa-, in which Xaa is preferably Leu, but may be other amino acids including Pro although not Arg or Lys, and Yaa may be Pro. Amino acid amides and methyl esters are also readily hydrolyzed, but rates on arylamides are exceedingly low.. It catalyses the reaction Release of an N-terminal amino acid, preferentially leucine, but not glutamic or aspartic acids.. Presumably involved in the processing and regular turnover of intracellular proteins. Catalyzes the removal of unsubstituted N-terminal amino acids from various peptides. This is Probable cytosol aminopeptidase from Protochlamydia amoebophila (strain UWE25).